A 346-amino-acid chain; its full sequence is Upstream stimulatory factor 2 (346 aa).

Disordered stretches follow at residues 1–44 and 215–244; these read MDML…PGAE and APRTHPYSPKIDGTRTPRDERRRAQHNEVE. Residues 11–20 are compositionally biased toward low complexity; sequence AASATAAAAA. Residues 226-244 show a composition bias toward basic and acidic residues; that stretch reads DGTRTPRDERRRAQHNEVE. Residues 235–290 form the bHLH domain; the sequence is RRRAQHNEVERRRRDKINNWIVQLSKIIPDCNADNSKTGASKGGILSKACDYIREL. Positions 307–328 are leucine-zipper; that stretch reads LQMDNELLRQQIEELKNENALL.

Interacts with MAF. Efficient DNA binding requires dimerization with another bHLH protein. Binds DNA as a homodimer or a heterodimer (USF1/USF2). In vivo, the USF1/USF2A heterodimer represents over 66% of the usf binding activity whereas the USF1 and USF2A homodimers represent less than 10%. The USF1/USF2B heterodimer accounted for almost 15% in some cell. In terms of tissue distribution, ubiquitous.

It localises to the nucleus. In terms of biological role, transcription factor that binds to a symmetrical DNA sequence (E-boxes) (5'-CACGTG-3') that is found in a variety of viral and cellular promoters. The sequence is that of Upstream stimulatory factor 2 (USF2) from Homo sapiens (Human).